A 338-amino-acid polypeptide reads, in one-letter code: Ketol-acid reductoisomerase (NADP(+)) (338 aa).

The 181-residue stretch at methionine 1–threonine 181 folds into the KARI N-terminal Rossmann domain. NADP(+) contacts are provided by residues tyrosine 24 to glutamine 27, arginine 47, serine 50, threonine 52, and aspartate 82 to glutamine 85. Histidine 107 is a catalytic residue. NADP(+) is bound at residue glycine 133. In terms of domain architecture, KARI C-terminal knotted spans threonine 182–isoleucine 327. The Mg(2+) site is built by aspartate 190, glutamate 194, glutamate 226, and glutamate 230. Position 251 (serine 251) interacts with substrate.

It belongs to the ketol-acid reductoisomerase family. It depends on Mg(2+) as a cofactor.

It carries out the reaction (2R)-2,3-dihydroxy-3-methylbutanoate + NADP(+) = (2S)-2-acetolactate + NADPH + H(+). The enzyme catalyses (2R,3R)-2,3-dihydroxy-3-methylpentanoate + NADP(+) = (S)-2-ethyl-2-hydroxy-3-oxobutanoate + NADPH + H(+). It participates in amino-acid biosynthesis; L-isoleucine biosynthesis; L-isoleucine from 2-oxobutanoate: step 2/4. The protein operates within amino-acid biosynthesis; L-valine biosynthesis; L-valine from pyruvate: step 2/4. In terms of biological role, involved in the biosynthesis of branched-chain amino acids (BCAA). Catalyzes an alkyl-migration followed by a ketol-acid reduction of (S)-2-acetolactate (S2AL) to yield (R)-2,3-dihydroxy-isovalerate. In the isomerase reaction, S2AL is rearranged via a Mg-dependent methyl migration to produce 3-hydroxy-3-methyl-2-ketobutyrate (HMKB). In the reductase reaction, this 2-ketoacid undergoes a metal-dependent reduction by NADPH to yield (R)-2,3-dihydroxy-isovalerate. This is Ketol-acid reductoisomerase (NADP(+)) from Pseudomonas entomophila (strain L48).